Consider the following 1248-residue polypeptide: Structural polyprotein (1248 aa).

Positions 1 to 10 are enriched in polar residues; it reads MEFIPTQTFY. The interval 1–104 is disordered; the sequence is MEFIPTQTFY…KKKKPGRRER (104 aa). Positions 22–44 are enriched in low complexity; that stretch reads RPTIQVIRPRPRPQRQAGQLAQL. The tract at residues 36–68 is host transcription inhibition; the sequence is RQAGQLAQLISAVNKLTMRAVPQQKPRRNRKNK. Basic residues predominate over residues 60-72; it reads KPRRNRKNKKQKQ. A Nuclear localization signal motif is present at residues 61–99; that stretch reads PRRNRKNKKQKQKQQAPQNNTNQKKQPPKKKPAQKKKKP. The segment covering 73–85 has biased composition (low complexity); it reads KQQAPQNNTNQKK. The interval 84–114 is binding to the viral RNA; sequence KKQPPKKKPAQKKKKPGRRERMCMKIENDCI. Residues 86–101 are compositionally biased toward basic residues; that stretch reads QPPKKKPAQKKKKPGR. The tract at residues 99-113 is ribosome-binding; sequence PGRRERMCMKIENDC. Cysteines 113 and 128 form a disulfide. One can recognise a Peptidase S3 domain in the interval 113–261; it reads CIFEVKHEGK…KITPEGAEEW (149 aa). The Charge relay system role is filled by His-139. Positions 144–154 match the Nuclear export signal motif; the sequence is IDNADLAKLAF. Residues 155–160 are interaction with spike glycoprotein E2; sequence KRSSKY. Residue Asp-161 is the Charge relay system of the active site. The interval 183-193 is dimerization of the capsid protein; it reads PEGYYNWHHGA. Ser-213 (charge relay system) is an active-site residue. The tract at residues 219–223 is dimerization of the capsid protein; the sequence is DNKGR. Residues 262-274 form a functions as an uncleaved signal peptide for the precursor of protein E3/E2 region; sequence SLAIPVMCLLANT. The Extracellular segment spans residues 262–692; sequence SLAIPVMCLL…YYYELYPTMT (431 aa). 9 disulfides stabilise this stretch: Cys-269-Cys-278, Cys-283-Cys-287, Cys-286-Cys-318, Cys-344-Cys-450, Cys-347-Cys-353, Cys-416-Cys-430, Cys-478-Cys-591, Cys-526-Cys-550, and Cys-528-Cys-545. N-linked (GlcNAc...) asparagine; by host glycosylation is present at Asn-273. 2 interaction with host Mxra8 receptor regions span residues 351-354 and 387-389; these read HSCH and HDW. Interaction with host Mxra8 receptor regions lie at residues 509–512 and 541–547; these read QSGN and VINNCKV. Asn-588 and Asn-670 each carry an N-linked (GlcNAc...) asparagine; by host glycan. A helical transmembrane segment spans residues 693–713; it reads VVVVSVASFILLSMVGMAVGM. At 714–748 the chain is on the cytoplasmic side; it reads CMCARRRCITPYELTPGATVPFLLSLICCIRTAKA. The interaction with the capsid protein stretch occupies residues 716-720; the sequence is CARRR. Residues Cys-721, Cys-741, and Cys-742 are each lipidated (S-palmitoyl cysteine; by host). Residues 721 to 741 form a transient transmembrane before p62-6K protein processing region; the sequence is CITPYELTPGATVPFLLSLIC. A disulfide bond links Cys-721 and Cys-742. Residues 749-763 lie on the Extracellular side of the membrane; that stretch reads ATYQEAAVYLWNEQQ. The helical transmembrane segment at 764 to 784 threads the bilayer; that stretch reads PLFWLQALIPLAALIVLCNCL. Over 785–795 the chain is Cytoplasmic; that stretch reads RLLPCCCKTLA. The chain crosses the membrane as a helical span at residues 796–816; that stretch reads FLAVMSIGAHTVSAYEHVTVI. The Extracellular portion of the chain corresponds to 817–1224; that stretch reads PNTVGVPYKT…AMSWVQKITG (408 aa). 4 disulfide bridges follow: Cys-858-Cys-923, Cys-871-Cys-903, Cys-872-Cys-905, and Cys-877-Cys-887. Residues 893–910 form an E1 fusion peptide loop region; it reads VYPFMWGGAYCFCDAENT. Asn-950 and Asn-1079 each carry an N-linked (GlcNAc...) asparagine; by host glycan. Disulfide bonds link Cys-1068–Cys-1080, Cys-1110–Cys-1185, Cys-1115–Cys-1189, and Cys-1137–Cys-1179. Residues 1225 to 1245 form a helical membrane-spanning segment; sequence GVGLVVAVAALILIVVLCVSF. Residue Cys-1242 is the site of S-palmitoyl cysteine; by host attachment. Cys-1242 carries S-stearoyl cysteine; by host lipidation. The Cytoplasmic portion of the chain corresponds to 1246-1248; the sequence is SRH.

It belongs to the alphavirus structural polyprotein family. As to quaternary structure, homodimer. Homomultimer. Interacts with host karyopherin KPNA4; this interaction allows the nuclear import of the viral capsid protein. Interacts with spike glycoprotein E2. Interacts with host IRAK1; the interaction leads to inhibition of IRAK1-dependent signaling. The precursor of protein E3/E2 and E1 form a heterodimer shortly after synthesis. In terms of assembly, interacts with spike glycoprotein E2. The precursor of protein E3/E2 and E1 form a heterodimer shortly after synthesis. Processing of the precursor of protein E3/E2 into E2 and E3 results in a heterodimer of the spike glycoproteins E2 and E1. Spike at virion surface are constituted of three E2-E1 heterodimers. After target cell attachment and endocytosis, E1 changes conformation to form homotrimers. Interacts with 6K protein. Interacts with host MXRA8; this interaction mediates virus entry. The interaction involves 2 adjacent E2-E1 heterodimers. As to quaternary structure, interacts with spike glycoprotein E1. Processing of the precursor of protein E3/E2 into E2 and E3 results in a heterodimer of the spike glycoproteins E2 and E1. Spike at virion surface are constituted of a trimer of E2-E1 heterodimers. Interacts with 6K protein. Interacts with host MXRA8; this interaction mediates virus entry. The interaction involves 2 adjacent E2-E1 heterodimers. Oligomer. Interacts with spike glycoprotein E1. Interacts with spike glycoprotein E2. In terms of processing, specific enzymatic cleavages in vivo yield mature proteins. Capsid protein is auto-cleaved during polyprotein translation, unmasking a signal peptide at the N-terminus of the precursor of E3/E2. The remaining polyprotein is then targeted to the host endoplasmic reticulum, where host signal peptidase cleaves it into pE2, 6K and E1 proteins. pE2 is further processed to mature E3 and E2 by host furin in trans-Golgi vesicle. Palmitoylated via thioester bonds. These palmitoylations may induce disruption of the C-terminus transmembrane. This would result in the reorientation of E2 C-terminus from lumenal to cytoplasmic side. Post-translationally, N-glycosylated. In terms of processing, palmitoylated via thioester bonds.

The protein localises to the virion. It localises to the host cytoplasm. Its subcellular location is the host cell membrane. The protein resides in the host nucleus. It is found in the virion membrane. The protein localises to the host Golgi apparatus. It localises to the host trans-Golgi network. Its subcellular location is the host endoplasmic reticulum. The enzyme catalyses Autocatalytic release of the core protein from the N-terminus of the togavirus structural polyprotein by hydrolysis of a -Trp-|-Ser- bond.. Its function is as follows. Forms an icosahedral capsid with a T=4 symmetry composed of 240 copies of the capsid protein surrounded by a lipid membrane through which penetrate 80 spikes composed of trimers of E1-E2 heterodimers. The capsid protein binds to the viral RNA genome at a site adjacent to a ribosome binding site for viral genome translation following genome release. Possesses a protease activity that results in its autocatalytic cleavage from the nascent structural protein. Following its self-cleavage, the capsid protein transiently associates with ribosomes, and within several minutes the protein binds to viral RNA and rapidly assembles into icosahedric core particles. The resulting nucleocapsid eventually associates with the cytoplasmic domain of the spike glycoprotein E2 at the cell membrane, leading to budding and formation of mature virions. In case of infection, new virions attach to target cells and after clathrin-mediated endocytosis their membrane fuses with the host endosomal membrane. This leads to the release of the nucleocapsid into the cytoplasm, followed by an uncoating event necessary for the genomic RNA to become accessible. The uncoating might be triggered by the interaction of capsid proteins with ribosomes. Binding of ribosomes would release the genomic RNA since the same region is genomic RNA-binding and ribosome-binding. Specifically inhibits interleukin-1 receptor-associated kinase 1/IRAK1-dependent signaling during viral entry, representing a means by which the alphaviruses may evade innate immune detection and activation prior to viral gene expression. Degrades host cyclic GMP-AMP synthase (CGAS) thereby inhibiting the cGAS-STING pathway. Provides the signal sequence for the translocation of the precursor of protein E3/E2 to the host endoplasmic reticulum. Furin-cleaved E3 remains associated with spike glycoprotein E1 and mediates pH protection of the latter during the transport via the secretory pathway. After virion release from the host cell, the assembly protein E3 is gradually released in the extracellular space. Functionally, plays a role in viral attachment to target host cell, by binding to the cell receptor MXRA8. Synthesized as a p62 precursor which is processed by furin at the cell membrane just before virion budding, giving rise to E2-E1 heterodimer. The p62-E1 heterodimer is stable, whereas E2-E1 is unstable and dissociate at low pH. p62 is processed at the last step, presumably to avoid E1 fusion activation before its final export to cell surface. E2 C-terminus contains a transitory transmembrane that would be disrupted by palmitoylation, resulting in reorientation of the C-terminal tail from lumenal to cytoplasmic side. This step is critical since E2 C-terminus is involved in budding by interacting with capsid proteins. This release of E2 C-terminus in cytoplasm occurs lately in protein export, and precludes premature assembly of particles at the endoplasmic reticulum membrane. In terms of biological role, acts as a viroporin that participates in virus glycoprotein processing and transport to the plasma membrane, cell permeabilization and budding of viral particles. Disrupts the calcium homeostasis of the cell, probably at the endoplasmic reticulum level. This leads to cytoplasmic calcium elevation. Because of its lipophilic properties, the 6K protein is postulated to influence the selection of lipids that interact with the transmembrane domains of the glycoproteins, which, in turn, affects the deformability of the bilayer required for the extreme curvature that occurs as budding proceeds. Present in low amount in virions, about 3% compared to viral glycoproteins. Its function is as follows. Class II viral fusion protein. Fusion activity is inactive as long as E1 is bound to E2 in mature virion. After virus attachment to target cell and endocytosis, acidification of the endosome induce dissociation of E1/E2 heterodimer and concomitant trimerization of the E1 subunits. This E1 trimer is fusion active, and promotes release of viral nucleocapsid in cytoplasm after endosome and viral membrane fusion. Efficient fusion requires the presence of cholesterol and sphingolipid in the target membrane. The polypeptide is Structural polyprotein (Chikungunya virus (strain S27-African prototype) (CHIKV)).